Here is a 145-residue protein sequence, read N- to C-terminus: UPF0201 protein SSO1042 (145 aa).

The protein belongs to the UPF0201 family.

This Saccharolobus solfataricus (strain ATCC 35092 / DSM 1617 / JCM 11322 / P2) (Sulfolobus solfataricus) protein is UPF0201 protein SSO1042.